We begin with the raw amino-acid sequence, 376 residues long: DNA double-strand break repair protein Mre11 (376 aa).

Mn(2+) is bound by residues D5, H7, D46, and D81. Catalysis depends on H82, which acts as the Proton donor. Mn(2+) is bound by residues H159, H189, and H191.

Belongs to the MRE11/RAD32 family. As to quaternary structure, homodimer. Forms a heterotetramer composed of two Mre11 subunits and two Rad50 subunits. It depends on Mn(2+) as a cofactor.

Nuclease activity is regulated by Rad50. In terms of biological role, part of the Rad50/Mre11 complex, which is involved in the early steps of DNA double-strand break (DSB) repair. The complex may facilitate opening of the processed DNA ends to aid in the recruitment of HerA and NurA. Mre11 binds to DSB ends and has both double-stranded 3'-5' exonuclease activity and single-stranded endonuclease activity. This Thermoplasma acidophilum (strain ATCC 25905 / DSM 1728 / JCM 9062 / NBRC 15155 / AMRC-C165) protein is DNA double-strand break repair protein Mre11.